A 123-amino-acid chain; its full sequence is Small ribosomal subunit protein uS12cz/uS12cy (123 aa).

It belongs to the universal ribosomal protein uS12 family. As to quaternary structure, part of the 30S ribosomal subunit.

It is found in the plastid. Its subcellular location is the chloroplast. Its function is as follows. With S4 and S5 plays an important role in translational accuracy. Located at the interface of the 30S and 50S subunits. This is Small ribosomal subunit protein uS12cz/uS12cy (rps12-A) from Coffea arabica (Arabian coffee).